Here is a 57-residue protein sequence, read N- to C-terminus: MTMAKSADIRPGITLACTECKERNYITTKNRRNTPDRLELKKFCPRCGKQTVHRETR.

It belongs to the bacterial ribosomal protein bL33 family.

This chain is Large ribosomal subunit protein bL33, found in Bifidobacterium longum (strain NCC 2705).